Here is a 177-residue protein sequence, read N- to C-terminus: Cell division protein ZapC (177 aa).

The protein belongs to the ZapC family. In terms of assembly, interacts directly with FtsZ.

The protein resides in the cytoplasm. In terms of biological role, contributes to the efficiency of the cell division process by stabilizing the polymeric form of the cell division protein FtsZ. Acts by promoting interactions between FtsZ protofilaments and suppressing the GTPase activity of FtsZ. In Shewanella oneidensis (strain ATCC 700550 / JCM 31522 / CIP 106686 / LMG 19005 / NCIMB 14063 / MR-1), this protein is Cell division protein ZapC.